We begin with the raw amino-acid sequence, 348 residues long: Mannonate dehydratase (348 aa).

Belongs to the mannonate dehydratase family. Fe(2+) serves as cofactor. The cofactor is Mn(2+).

The enzyme catalyses D-mannonate = 2-dehydro-3-deoxy-D-gluconate + H2O. The protein operates within carbohydrate metabolism; pentose and glucuronate interconversion. Catalyzes the dehydration of D-mannonate. This chain is Mannonate dehydratase, found in Streptococcus uberis (strain ATCC BAA-854 / 0140J).